The following is a 303-amino-acid chain: Porphobilinogen deaminase (303 aa).

S-(dipyrrolylmethanemethyl)cysteine is present on Cys241.

The protein belongs to the HMBS family. As to quaternary structure, monomer. Requires dipyrromethane as cofactor.

The enzyme catalyses 4 porphobilinogen + H2O = hydroxymethylbilane + 4 NH4(+). The protein operates within porphyrin-containing compound metabolism; protoporphyrin-IX biosynthesis; coproporphyrinogen-III from 5-aminolevulinate: step 2/4. It participates in porphyrin-containing compound metabolism; chlorophyll biosynthesis. In terms of biological role, tetrapolymerization of the monopyrrole PBG into the hydroxymethylbilane pre-uroporphyrinogen in several discrete steps. The polypeptide is Porphobilinogen deaminase (Roseiflexus castenholzii (strain DSM 13941 / HLO8)).